Here is a 332-residue protein sequence, read N- to C-terminus: MEHLGPHHLHPGHAEPISFGIEQILNSPDQGGCMGPNSRLQDGDYGLGCLVPGAYTYGGGGSAAGAGAGGTGAYGAGGPGGPGGPAGGGGGACSMGPLPGSYNVNMDLAGGPGPGGDGGGGGAARRALSAAGVIRVPAHRPLAGAVAHPQPLATGLPTVPSVPAVPGVNNLTGLTFPWMESNRRYTKDRFTGLPYQNRTPPKKKKPRTSFTRLQICELEKRFHRQKYLASAERAALAKALKMTDAQVKTWFQNRRTKWRRQTAEEREAESEQANRILLQLQQEAFQKSLAQPLPADPLCVHNSSLFALQNLQPWSDDSTKITSVTSVASACE.

Positions 203-262 (KKKPRTSFTRLQICELEKRFHRQKYLASAERAALAKALKMTDAQVKTWFQNRRTKWRRQT) form a DNA-binding region, homeobox. Lys238 carries the N6-acetyllysine modification.

In terms of tissue distribution, expressed in various embryonic tissues, including branchial arches, some component of the nervous system and spleen.

It localises to the nucleus. Controls the genesis of the spleen. Binds to the DNA sequence 5'-GGCGGTAAGTGG-3'. This chain is T-cell leukemia homeobox protein 1 (Tlx1), found in Mus musculus (Mouse).